We begin with the raw amino-acid sequence, 145 residues long: Monooxygenase AacuP (145 aa).

Belongs to the avfA family.

The protein operates within secondary metabolite biosynthesis. Functionally, monooxygenase; part of the gene cluster that mediates the biosynthesis of the tetrahydroxanthone dimer secalonic acid D. The pathway begins with the synthesis of atrochrysone thioester by the polyketide synthase AacuL. The atrochrysone carboxyl ACP thioesterase AacuM then breaks the thioester bond and releases the atrochrysone carboxylic acid from AacuL. Atrochrysone carboxylic acid is decarboxylated by the decarboxylase AacuI, and oxidized by the anthrone oxygenase AacuG to yield emodin. Emodin is then reduced to emodin hydroquinone by a yet unidentified oxidoreductase. A-ring reduction by the short chain dehydrogenase AacuN, dehydration by the scytalone dehydratase-like protein AacuK and probable spontaneous re-oxidation, results in overall deoxygenation to chrysophanol. Baeyer-Villiger oxidation by the Baeyer-Villiger monooxygenase (BVMO) AacuH then yields monodictyphenone. Monodictyphenone is transformed into compounds with the tetrahydroxanthone skeleton via methylesterification by the methyltransferase AacuQ, followed by the action of the flavin-dependent monooxygenase AacuC, the isomerase AacuP, and the short chain dehydrogenase/reductase AacuF or AacuD. AacuF and AacuD should accept the same compound as a substrate but perform the ketoreduction with a different stereoselectivity, thus yielding blennolides B and A, respectively. In the final step of the biosynthesis, the cytochrome P450 monooxygenase AacuE accepts blennolide B and/or blennolide A to conduct the dimerization reaction to furnish the tetrahydroxanthone dimers, secalonic acids D, B, and F. In Aspergillus aculeatus (strain ATCC 16872 / CBS 172.66 / WB 5094), this protein is Monooxygenase AacuP.